We begin with the raw amino-acid sequence, 449 residues long: Tubulin alpha-2 chain (449 aa).

Positions 11, 71, 140, 144, 145, 179, 206, and 228 each coordinate GTP. A Mg(2+)-binding site is contributed by E71. E254 is an active-site residue.

Belongs to the tubulin family. In terms of assembly, dimer of alpha and beta chains. A typical microtubule is a hollow water-filled tube with an outer diameter of 25 nm and an inner diameter of 15 nM. Alpha-beta heterodimers associate head-to-tail to form protofilaments running lengthwise along the microtubule wall with the beta-tubulin subunit facing the microtubule plus end conferring a structural polarity. Microtubules usually have 13 protofilaments but different protofilament numbers can be found in some organisms and specialized cells. Mg(2+) serves as cofactor.

It is found in the cytoplasm. The protein resides in the cytoskeleton. The catalysed reaction is GTP + H2O = GDP + phosphate + H(+). Tubulin is the major constituent of microtubules, a cylinder consisting of laterally associated linear protofilaments composed of alpha- and beta-tubulin heterodimers. Microtubules grow by the addition of GTP-tubulin dimers to the microtubule end, where a stabilizing cap forms. Below the cap, tubulin dimers are in GDP-bound state, owing to GTPase activity of alpha-tubulin. The protein is Tubulin alpha-2 chain (tub1) of Schizosaccharomyces pombe (strain 972 / ATCC 24843) (Fission yeast).